Here is a 248-residue protein sequence, read N- to C-terminus: 2,3-bisphosphoglycerate-dependent phosphoglycerate mutase (248 aa).

Residues 7–14 (RHGESIWN), 20–21 (TG), Arg-59, 86–89 (ERHY), Lys-97, 113–114 (RR), and 182–183 (GN) each bind substrate. The active-site Tele-phosphohistidine intermediate is His-8. The active-site Proton donor/acceptor is the Glu-86.

It belongs to the phosphoglycerate mutase family. BPG-dependent PGAM subfamily.

The enzyme catalyses (2R)-2-phosphoglycerate = (2R)-3-phosphoglycerate. It participates in carbohydrate degradation; glycolysis; pyruvate from D-glyceraldehyde 3-phosphate: step 3/5. Functionally, catalyzes the interconversion of 2-phosphoglycerate and 3-phosphoglycerate. The polypeptide is 2,3-bisphosphoglycerate-dependent phosphoglycerate mutase (Methylacidiphilum infernorum (isolate V4) (Methylokorus infernorum (strain V4))).